A 58-amino-acid chain; its full sequence is Small ribosomal subunit protein bS21 (58 aa).

Residues 36-58 (EHYEKPSVKRKKKSEAARRRKYR) form a disordered region. Over residues 43-58 (VKRKKKSEAARRRKYR) the composition is skewed to basic residues.

This sequence belongs to the bacterial ribosomal protein bS21 family.

This Symbiobacterium thermophilum (strain DSM 24528 / JCM 14929 / IAM 14863 / T) protein is Small ribosomal subunit protein bS21.